Consider the following 40-residue polypeptide: MKVRNSIKALKKLPGAQVVRRRGRVFVINKQNPRNKARQG.

It belongs to the bacterial ribosomal protein bL36 family.

This chain is Large ribosomal subunit protein bL36B, found in Clavibacter michiganensis subsp. michiganensis (strain NCPPB 382).